The following is a 141-amino-acid chain: MAKKVTAVVKLQLPAGKATPAPPVGPALGATGINIMAFCKDYNEKTSAQVGTIIPVEITVYSDRSFTYILKTPPAADLLRKAAGIQRGSGKTGTQGAGSITRAQLRQLAETKMPDLNANDIEAAEKIIAGTARSMGIAIKD.

It belongs to the universal ribosomal protein uL11 family. Part of the ribosomal stalk of the 50S ribosomal subunit. Interacts with L10 and the large rRNA to form the base of the stalk. L10 forms an elongated spine to which L12 dimers bind in a sequential fashion forming a multimeric L10(L12)X complex. In terms of processing, one or more lysine residues are methylated.

In terms of biological role, forms part of the ribosomal stalk which helps the ribosome interact with GTP-bound translation factors. The protein is Large ribosomal subunit protein uL11 of Herpetosiphon aurantiacus (strain ATCC 23779 / DSM 785 / 114-95).